Here is a 449-residue protein sequence, read N- to C-terminus: Methylenetetrahydrofolate--tRNA-(uracil-5-)-methyltransferase TrmFO (449 aa).

Residue 9–14 (GGGMAG) coordinates FAD.

It belongs to the MnmG family. TrmFO subfamily. The cofactor is FAD.

It localises to the cytoplasm. It carries out the reaction uridine(54) in tRNA + (6R)-5,10-methylene-5,6,7,8-tetrahydrofolate + NADH + H(+) = 5-methyluridine(54) in tRNA + (6S)-5,6,7,8-tetrahydrofolate + NAD(+). The enzyme catalyses uridine(54) in tRNA + (6R)-5,10-methylene-5,6,7,8-tetrahydrofolate + NADPH + H(+) = 5-methyluridine(54) in tRNA + (6S)-5,6,7,8-tetrahydrofolate + NADP(+). Catalyzes the folate-dependent formation of 5-methyl-uridine at position 54 (M-5-U54) in all tRNAs. The sequence is that of Methylenetetrahydrofolate--tRNA-(uracil-5-)-methyltransferase TrmFO from Ruegeria pomeroyi (strain ATCC 700808 / DSM 15171 / DSS-3) (Silicibacter pomeroyi).